The following is a 495-amino-acid chain: Probable leucine aminopeptidase 2 (495 aa).

Residues 1–21 form the signal peptide; that stretch reads MKSQLLSLAVAVTTISQGVVG. The PA domain occupies 130 to 216; it reads MAELVVAKNN…SQEDGKNLAT (87 aa). Residues Asn-142 and Asn-235 are each glycosylated (N-linked (GlcNAc...) asparagine). Residues His-259 and Asp-271 each coordinate Zn(2+). A glycan (N-linked (GlcNAc...) asparagine) is linked at Asn-272. The active-site Proton acceptor is Glu-303. Zn(2+)-binding residues include Glu-304 and Asp-332. N-linked (GlcNAc...) asparagine glycosylation is present at Asn-352. Residue His-430 coordinates Zn(2+).

It belongs to the peptidase M28 family. M28A subfamily. As to quaternary structure, monomer. Requires Zn(2+) as cofactor.

Its subcellular location is the secreted. In terms of biological role, extracellular aminopeptidase that releases a wide variety of amino acids from natural peptides and contributes to pathogenicity. The protein is Probable leucine aminopeptidase 2 (LAP2) of Arthroderma benhamiae (strain ATCC MYA-4681 / CBS 112371) (Trichophyton mentagrophytes).